The chain runs to 1156 residues: Protein hu-li tai shao (1156 aa).

Positions 1–36 (MTEVEQPPQNGIDPTAGEDDDNSKARPADIEQDMRE) are disordered. Basic and acidic residues predominate over residues 22–36 (NSKARPADIEQDMRE). At Ser-478 the chain carries Phosphoserine. Phosphothreonine is present on residues Thr-480 and Thr-498. Ser-603 is subject to Phosphoserine. At Tyr-608 the chain carries Phosphotyrosine. Phosphothreonine occurs at positions 609 and 611. A Phosphoserine modification is found at Ser-614. Tyr-627 is subject to Phosphotyrosine. A Phosphoserine modification is found at Ser-630. Residues 897–956 (FLPSNHALPKDTDANNRDQTDRERPEAEQEESFHCAGDSGIGDSTGRRPRLATTSNDSSI) are disordered. Positions 904–929 (LPKDTDANNRDQTDRERPEAEQEESF) are enriched in basic and acidic residues.

Belongs to the aldolase class II family. Adducin subfamily. As to expression, isoform C is expressed in nurse cells. Isoform A is produced in the nurse cell but transported into the oocyte at stage 1, localizes to the oocyte cortex at stage 8 and to the anterior pole from day 9 onwards. Isoform B is expressed in the somatic follicle cells that surround the germline.

It localises to the cytoplasm. It is found in the cytoskeleton. The protein resides in the cell membrane. Functionally, required for assembling actin at ring canals in developing egg chambers. Probably interacts with other developmental proteins involved in nurse cell/oocyte transport through the ring canals. Important for normal neuromotor function. This chain is Protein hu-li tai shao (hts), found in Drosophila melanogaster (Fruit fly).